A 304-amino-acid polypeptide reads, in one-letter code: HTH-type transcriptional regulator AdmX (304 aa).

Positions 1–58 (MKLRHLEIFYTVMTCGSLSRAAESLNISQPAASKSLKNAELKLGFKLFQRVRGKLLPS) constitute an HTH lysR-type domain. The segment at residues 18–37 (LSRAAESLNISQPAASKSLK) is a DNA-binding region (H-T-H motif).

This sequence belongs to the LysR transcriptional regulatory family.

The protein resides in the cytoplasm. AdmX-mediated transcription is inhibited by indole-3-acetic and indole-3-pyruvic acids. AdmX recognizes and binds the auxin indole-3-acetic acid (IAA), which causes conformational changes in AdmX that result in the inhibition of the expression of the andrimid gene cluster and the suppression of antibiotic production. It also recognizes indole-3-pyruvic acid (IPA), an intermediate of the main IAA biosynthetic pathway in plants and plant beneficial bacteria, which also prevents andrimid synthesis, but to a much lesser extent. In terms of biological role, positively regulates the biosynthesis of andrimid, a broad-spectrum antibiotic, by activating the expression of the adm biosynthetic gene cluster. It specifically binds to a region within the adm promoter. This is HTH-type transcriptional regulator AdmX from Serratia plymuthica.